Here is a 236-residue protein sequence, read N- to C-terminus: Small ribosomal subunit protein uS2c (236 aa).

This sequence belongs to the universal ribosomal protein uS2 family.

The protein resides in the plastid. The protein localises to the chloroplast. The chain is Small ribosomal subunit protein uS2c (rps2) from Chaetosphaeridium globosum (Charophycean green alga).